The primary structure comprises 683 residues: Probable serine/threonine-protein kinase HAL5-like (683 aa).

Disordered regions lie at residues 1–90 (MPQQ…VSDE) and 157–200 (YPQN…SKKA). Residues 36–48 (PSSAATSDSSEMS) are compositionally biased toward low complexity. Gly residues predominate over residues 50–60 (AQGGRGNGLLG). The span at 69-85 (SPKSEAQFTQRNKSAES) shows a compositional bias: polar residues. The 307-residue stretch at 364-670 (GKCIGMIGQG…IPKLLDTPWM (307 aa)) folds into the Protein kinase domain. ATP contacts are provided by residues 370 to 378 (IGQGAYGTV) and Lys411. Asp521 acts as the Proton acceptor in catalysis.

This sequence belongs to the protein kinase superfamily. CAMK Ser/Thr protein kinase family. NPR/HAL subfamily. HAL5 sub-subfamily.

It carries out the reaction L-seryl-[protein] + ATP = O-phospho-L-seryl-[protein] + ADP + H(+). The enzyme catalyses L-threonyl-[protein] + ATP = O-phospho-L-threonyl-[protein] + ADP + H(+). This chain is Probable serine/threonine-protein kinase HAL5-like, found in Eremothecium gossypii (strain ATCC 10895 / CBS 109.51 / FGSC 9923 / NRRL Y-1056) (Yeast).